A 168-amino-acid polypeptide reads, in one-letter code: uncharacterized protein (168 aa).

Residues 23 to 47 (LFARASIIGVALLLSACATVPMASV) traverse the membrane as a helical segment.

Its subcellular location is the membrane. This is an uncharacterized protein from Haemophilus influenzae (strain ATCC 51907 / DSM 11121 / KW20 / Rd).